Here is a 414-residue protein sequence, read N- to C-terminus: Poly(3-hydroxyalkanoate) depolymerase C (414 aa).

The first 37 residues, 1–37 (MLAKQIKKANSRSTLLRKSLLFAAPIILAVSSSSVYA), serve as a signal peptide directing secretion. S154 functions as the Charge relay system in the catalytic mechanism.

This sequence belongs to the AB hydrolase superfamily. Lipase family.

It is found in the secreted. Its function is as follows. Specific for poly(hydroxyalkanoic acid) consisting of monomers of four or five carbon atoms and for P-nitrophenylbutyrate as substrates. This is Poly(3-hydroxyalkanoate) depolymerase C (phaZ1) from Paucimonas lemoignei (Pseudomonas lemoignei).